The primary structure comprises 39 residues: Photosystem II reaction center protein L (39 aa).

The chain crosses the membrane as a helical span at residues 18-38 (SLYLGLLFVFVTGVLMSSYFF).

This sequence belongs to the PsbL family. PSII is composed of 1 copy each of membrane proteins PsbA, PsbB, PsbC, PsbD, PsbE, PsbF, PsbH, PsbI, PsbJ, PsbK, PsbL, PsbM, PsbT, PsbX, PsbY, PsbZ, Psb30/Ycf12, peripheral proteins PsbO, CyanoQ (PsbQ), PsbU, PsbV and a large number of cofactors. It forms dimeric complexes.

It localises to the cellular thylakoid membrane. Its function is as follows. One of the components of the core complex of photosystem II (PSII). PSII is a light-driven water:plastoquinone oxidoreductase that uses light energy to abstract electrons from H(2)O, generating O(2) and a proton gradient subsequently used for ATP formation. It consists of a core antenna complex that captures photons, and an electron transfer chain that converts photonic excitation into a charge separation. This subunit is found at the monomer-monomer interface and is required for correct PSII assembly and/or dimerization. The sequence is that of Photosystem II reaction center protein L from Synechococcus sp. (strain CC9605).